The following is a 478-amino-acid chain: Putative UDP-glucose flavonoid 3-O-glucosyltransferase 3 (478 aa).

This sequence belongs to the UDP-glycosyltransferase family.

The chain is Putative UDP-glucose flavonoid 3-O-glucosyltransferase 3 from Fragaria ananassa (Strawberry).